The following is an 858-amino-acid chain: Envelope glycoprotein gp160 (858 aa).

The signal sequence occupies residues 1 to 19; the sequence is MMNQLLIAILLASACLVYC. Topologically, residues 20-679 are extracellular; the sequence is TQYVTVFYGV…LTSWVKYIQY (660 aa). A glycan (N-linked (GlcNAc...) asparagine; by host) is linked at N34. Cysteines 41 and 54 form a disulfide. Residues N67, N76, N119, N120, N151, N166, N179, N192, N193, N196, N206, N238, N241, N248, N272, N278, N289, N300, N310, N367, N371, N400, N410, N447, N463, and N466 are each glycosylated (N-linked (GlcNAc...) asparagine; by host). Intrachain disulfides connect C98/C214, C105/C205, C110/C163, C227/C257, and C237/C249. The V1 stretch occupies residues 110 to 162; the sequence is CSSTESSTGNNTTSKSTSTTTTTPTDQEQEISEDTPCARADNCSGLGEEETIN. The span at 111–134 shows a compositional bias: low complexity; that stretch reads SSTESSTGNNTTSKSTSTTTTTPT. The segment at 111–142 is disordered; that stretch reads SSTESSTGNNTTSKSTSTTTTTPTDQEQEISE. Residues 163–205 form a V2 region; the sequence is CQFNMTGLERDKKKQYNETWYSKDVVCETNNSTNQTQCYMNHC. A V3 region spans residues 305–339; sequence CKRPGNKTVKQIMLMSGHVFHSHYQPINKRPRQAW. C305 and C340 are disulfide-bonded. 2 disulfide bridges follow: C392–C446 and C399–C419. The V4 stretch occupies residues 399–419; the sequence is CNMTWFLNWIENKTHRNYAPC. The segment at 462 to 469 is V5; it reads NNQTNITF. The tract at residues 512–532 is fusion peptide; the sequence is GVFVLGFLGFLATAGSAMGAA. The interval 575–591 is immunosuppression; it reads LQARVTAIEKYLQDQAR. N-linked (GlcNAc...) asparagine; by host glycosylation is found at N611, N620, and N636. Residues 624 to 645 are a coiled coil; it reads QEWEKQVRYLEANISKSLEQAQ. Residues 657–678 form an MPER; binding to GalCer region; the sequence is KLNSWDIFGNWFDLTSWVKYIQ. A helical membrane pass occupies residues 680-700; sequence GVLIIVAVIALRIVIYVVQML. The Cytoplasmic portion of the chain corresponds to 701-858; sequence SRLRKGYRPV…IRQGAEIALL (158 aa). A YXXV motif; contains endocytosis signal motif is present at residues 707-710; it reads YRPV. A lipid anchor (S-palmitoyl cysteine; by host) is attached at C773. The short motif at 857-858 is the Di-leucine internalization motif element; sequence LL.

In terms of assembly, the mature envelope protein (Env) consists of a homotrimer of non-covalently associated gp120-gp41 heterodimers. The resulting complex protrudes from the virus surface as a spike. There seems to be as few as 10 spikes on the average virion. Interacts with human CD4, CCR5 and CXCR4, to form a P4HB/PDI-CD4-CXCR4-gp120 complex. Gp120 also interacts with the C-type lectins CD209/DC-SIGN and CLEC4M/DC-SIGNR (collectively referred to as DC-SIGN(R)). Gp120 and gp41 interact with GalCer. The mature envelope protein (Env) consists of a homotrimer of non-covalently associated gp120-gp41 heterodimers. The resulting complex protrudes from the virus surface as a spike. There seems to be as few as 10 spikes on the average virion. In terms of processing, specific enzymatic cleavages in vivo yield mature proteins. Envelope glycoproteins are synthesized as an inactive precursor that is heavily N-glycosylated and processed likely by host cell furin in the Golgi to yield the mature SU and TM proteins. The cleavage site between SU and TM requires the minimal sequence [KR]-X-[KR]-R. Palmitoylation of the transmembrane protein and of Env polyprotein (prior to its proteolytic cleavage) is essential for their association with host cell membrane lipid rafts. Palmitoylation is therefore required for envelope trafficking to classical lipid rafts, but not for viral replication.

The protein resides in the virion membrane. Its subcellular location is the host cell membrane. It localises to the host endosome membrane. Functionally, the surface protein gp120 (SU) attaches the virus to the host lymphoid cell by binding to the primary receptor CD4. This interaction induces a structural rearrangement creating a high affinity binding site for a chemokine coreceptor like CXCR4 and/or CCR5. This peculiar 2 stage receptor-interaction strategy allows gp120 to maintain the highly conserved coreceptor-binding site in a cryptic conformation, protected from neutralizing antibodies. Since CD4 also displays a binding site for the disulfide-isomerase P4HB/PDI, a P4HB/PDI-CD4-CXCR4-gp120 complex may form. In that complex, P4HB/PDI could reach and reduce gp120 disulfide bonds, causing major conformational changes in gp120. TXN, another PDI family member could also be involved in disulfide rearrangements in Env during fusion. These changes are transmitted to the transmembrane protein gp41 and are thought to activate its fusogenic potential by unmasking its fusion peptide. The surface protein gp120 is a ligand for CD209/DC-SIGN and CLEC4M/DC-SIGNR, which are respectively found on dendritic cells (DCs), and on endothelial cells of liver sinusoids and lymph node sinuses. These interactions allow capture of viral particles at mucosal surfaces by these cells and subsequent transmission to permissive cells. DCs are professional antigen presenting cells, critical for host immunity by inducing specific immune responses against a broad variety of pathogens. They act as sentinels in various tissues where they take up antigen, process it, and present it to T-cells following migration to lymphoid organs. HIV subverts the migration properties of dendritic cells to gain access to CD4+ T-cells in lymph nodes. Virus transmission to permissive T-cells occurs either in trans (without DCs infection, through viral capture and transmission), or in cis (following DCs productive infection, through the usual CD4-gp120 interaction), thereby inducing a robust infection. In trans infection, bound virions remain infectious over days and it is proposed that they are not degraded, but protected in non-lysosomal acidic organelles within the DCs close to the cell membrane thus contributing to the viral infectious potential during DCs' migration from the periphery to the lymphoid tissues. On arrival at lymphoid tissues, intact virions recycle back to DCs' cell surface allowing virus transmission to CD4+ T-cells. Virion capture also seems to lead to MHC-II-restricted viral antigen presentation, and probably to the activation of HIV-specific CD4+ cells. Its function is as follows. The transmembrane protein gp41 (TM) acts as a class I viral fusion protein. Under the current model, the protein has at least 3 conformational states: pre-fusion native state, pre-hairpin intermediate state, and post-fusion hairpin state. During fusion of viral and target intracellular membranes, the coiled coil regions (heptad repeats) assume a trimer-of-hairpins structure, positioning the fusion peptide in close proximity to the C-terminal region of the ectodomain. The formation of this structure appears to drive apposition and subsequent fusion of viral and target cell membranes. Complete fusion occurs in host cell endosomes and is dynamin-dependent, however some lipid transfer might occur at the plasma membrane. The virus undergoes clathrin-dependent internalization long before endosomal fusion, thus minimizing the surface exposure of conserved viral epitopes during fusion and reducing the efficacy of inhibitors targeting these epitopes. Membranes fusion leads to delivery of the nucleocapsid into the cytoplasm. In terms of biological role, the envelope glycoprotein gp160 precursor down-modulates cell surface CD4 antigen by interacting with it in the endoplasmic reticulum and blocking its transport to the cell surface. Functionally, the gp120-gp41 heterodimer seems to contribute to T-cell depletion during HIV-1 infection. The envelope glycoproteins expressed on the surface of infected cells induce apoptosis through an interaction with uninfected cells expressing the receptor (CD4) and the coreceptors CXCR4 or CCR5. This type of bystander killing may be obtained by at least three distinct mechanisms. First, the interaction between the 2 cells can induce cellular fusion followed by nuclear fusion within the syncytium. Syncytia are condemned to die from apoptosis. Second, the 2 interacting cells may not fuse entirely and simply exchange plasma membrane lipids, after a sort of hemifusion process, followed by rapid death. Third, it is possible that virus-infected cells, on the point of undergoing apoptosis, fuse with CD4-expressing cells, in which case apoptosis is rapidly transmitted from one cell to the other and thus occurs in a sort of contagious fashion. The gp120-gp41 heterodimer allows rapid transcytosis of the virus through CD4 negative cells such as simple epithelial monolayers of the intestinal, rectal and endocervical epithelial barriers. Both gp120 and gp41 specifically recognize glycosphingolipids galactosyl-ceramide (GalCer) or 3' sulfo-galactosyl-ceramide (GalS) present in the lipid rafts structures of epithelial cells. Binding to these alternative receptors allows the rapid transcytosis of the virus through the epithelial cells. This transcytotic vesicle-mediated transport of virions from the apical side to the basolateral side of the epithelial cells does not involve infection of the cells themselves. The protein is Envelope glycoprotein gp160 (env) of Homo sapiens (Human).